We begin with the raw amino-acid sequence, 2549 residues long: Serine/threonine-protein kinase mTOR (2549 aa).

Methionine 1 bears the N-acetylmethionine mark. The interval 1–651 (MLGTGPATAT…HVVSQTAVQV (651 aa)) is interaction with NBN. HEAT repeat units follow at residues 16 to 53 (SSNVSVLQQFASGLKSRNEETRAKAAKELQHYVTMELR), 55 to 99 (MSQE…VEGG), 100 to 137 (NSTRIGRFANYLRNLLPSSDPVVMEMASKAIGRLAMAG), 138 to 179 (DTFT…AISV), 180 to 220 (PTFF…LILT), 222 to 276 (QREP…RISS), 277 to 313 (MEGERLREEMEEITQQQLVHDKYCKDLMGFGTKPRHI), 314 to 364 (TPFT…CCRD), 365 to 409 (LMEE…AFTD), 410 to 445 (TQYLQDTMNHVLSCVKKEKERTAAFQALGLLSVAVR), 446 to 494 (SEFK…RAMG), 495 to 529 (PGIQQDIKELLEPMLAVGLSPALTAVLYDLSRQIP), 530 to 563 (QLKKDIQDGLLKMLSLVLMHKPLRHPGMPKGLAH), 564 to 596 (QLASPGLTTLPEASDVASITLALRTLGSFEFEG), 597 to 636 (HSLTQFVRHCADHFLNSEHKEIRMEAARTCSRLLTPSIHL), 637 to 683 (ISGH…DERF), 686 to 724 (HLAQAENLQALFVALNDQVFEIRELAICTVGRLSSMNPA), 727 to 766 (MPFLRKMLIQILTELEHSGIGRIKEQSARMLGHLVSNAPR), 769 to 811 (RPYM…VSGL), 814 to 853 (RKWVDELFVIIMDMLQDSSLLAKRQVALWTLGQLVASTGY), 857 to 893 (PYRKYPTLLEVLLNFLKTEQNQGTRREAIRVLGLLGA), 894 to 942 (LDPY…GNLP), 943 to 988 (LDEF…KCVQ), 989 to 1027 (FLPQVMPTFLNVIRVCDGAIREFLFQQLGMLVSFVKSHI), 1029 to 1068 (PYMDEIVTLMREFWVMNTSIQSTIILLIEQIVVALGGEFK), 1069 to 1105 (LYLPQLIPHMLRVFMHDNSQGRIVSIKLLAAIQLFGA), 1106 to 1144 (NLDDYLHLLLPPIVKLFDAPEVPLPSRKAALETVDRLTE), 1145 to 1188 (SLDF…GKKY), 1189 to 1225 (QIFIPMVNKVLVRHRINHQRYDVLICRIVKGYTLADE), 1226 to 1273 (EEDP…GAAR), 1274 to 1311 (RVSKDDWLEWLRRLSLELLKDSSSPSLRSCWALAQAYN), and 1312 to 1345 (PMARDLFNAAFVSCWSELNEDQQDELIRSIELAL). Serine 567 is subject to Phosphoserine. Threonine 1162 is modified (phosphothreonine). The residue at position 1218 (lysine 1218) is an N6-acetyllysine. Serine 1261 carries the post-translational modification Phosphoserine. 16 TPR repeats span residues 1346 to 1382 (TSQDIAEVTQTLLNLAEFMEHSDKGPLPLRDDNGIVL), 1383 to 1408 (LGERAAKCRAYAKALHYKELEFQKGP), 1409 to 1442 (TPAILESLISINNKLQQPEAASGVLEYAMKHFGE), 1443 to 1473 (LEIQATWYEKLHEWEDALVAYDKKMDTNKDD), 1474 to 1507 (PELMLGRMRCLEALGEWGQLHQQCCEKWTLVNDE), 1508 to 1541 (TQAKMARMAAAAAWGLGQWDSMEEYTCMIPRDTH), 1542 to 1574 (DGAFYRAVLALHQDLFSLAQQCIDKARDLLDAE), 1575 to 1614 (LTAMAGESYSRAYGAMVSCHMLSELEEVIQYKLVPERREI), 1615 to 1649 (IRQIWWERLQGCQRIVEDWQKILMVRSLVVSPHED), 1650 to 1693 (MRTW…PTVH), 1694 to 1731 (PQVTYAYMKNMWKSARKIDAFQHMQHFVQTMQQQAQHA), 1732 to 1786 (IATE…DRSW), 1787 to 1846 (YKAW…STEG), 1898 to 1930 (NNLQDTLRVLTLWFDYGHWPDVNEALVEGVKAI), 1931 to 1970 (QIDTWLQVIPQLIARIDTPRPLVGRLIHQLLTDIGRYHPQ), and 1971 to 2005 (ALIYPLTVASKSTTTARHNAANKILKNMCEHSNTL). One can recognise an FAT domain in the interval 1382-1982 (LLGERAAKCR…IYPLTVASKS (601 aa)). Residues lysine 1662, lysine 1702, and arginine 1749 each contribute to the 1D-myo-inositol hexakisphosphate site. The interval 1812-1867 (DEKKKLRHASGANITNATTTATTAASAAAATSTEGSNSESEAESNESSPTPSPLQK) is disordered. The span at 1826–1860 (TNATTTATTAASAAAATSTEGSNSESEAESNESSP) shows a compositional bias: low complexity. The interval 2012–2144 (VSEELIRVAI…DLELAVPGTY (133 aa)) is sufficient for interaction with the FKBP1A/rapamycin complex. Residue lysine 2066 forms a Glycyl lysine isopeptide (Lys-Gly) (interchain with G-Cter in ubiquitin) linkage. In terms of domain architecture, PI3K/PI4K catalytic spans 2156-2469 (IAPSLQVITS…GVELGEPAHK (314 aa)). Serine 2159 is modified (phosphoserine). Positions 2162–2168 (VITSKQR) are G-loop. Threonine 2164 is subject to Phosphothreonine. ATP-binding residues include serine 2165 and glutamine 2167. Threonine 2173 bears the Phosphothreonine; by PKB/AKT1 mark. Leucine 2185, lysine 2187, glutamate 2190, tyrosine 2225, glycine 2238, tryptophan 2239, valine 2240, and threonine 2245 together coordinate ATP. An interaction with MLST8 region spans residues 2258 to 2296 (KILLNIEHRIMLRMAPDYDHLTLMQKVEVFEHAVNNTAG). A catalytic loop region spans residues 2335-2343 (GLGDRHPSN). Asparagine 2343 contributes to the Mg(2+) binding site. Residues methionine 2345 and isoleucine 2356 each contribute to the ATP site. An activation loop region spans residues 2355 to 2380 (HIDFGDCFEVAMTREKFPEKIPFRLT). Aspartate 2357 is a Mg(2+) binding site. Threonine 2446 is modified (phosphothreonine; by RPS6KB1). Serine 2448 carries the phosphoserine; by RPS6KB1 modification. Serine 2478 is modified (phosphoserine). Residue serine 2481 is modified to Phosphoserine; by autocatalysis. The region spanning 2517-2549 (DTLDVPTQVELLIKQATSHENLCQCYIGWCPFW) is the FATC domain.

Belongs to the PI3/PI4-kinase family. Part of the mechanistic target of rapamycin complex 1 (mTORC1) which contains MTOR, MLST8 and RPTOR. The mTORC1 complex is a 1 Md obligate dimer of two stoichiometric heterotetramers with overall dimensions of 290 A x 210 A x 135 A. It has a rhomboid shape and a central cavity, the dimeric interfaces are formed by interlocking interactions between the two MTOR and the two RPTOR subunits. The MLST8 subunit forms distal foot-like protuberances, and contacts only one MTOR within the complex, while the small AKT1S1/PRAS40 localizes to the midsection of the central core, in close proximity to RPTOR. mTORC1 associates with AKT1S1/PRAS40, which inhibits its activity by blocking MTOR substrate-recruitment site. Component of the mechanistic target of rapamycin complex 2 (mTORC2), consisting in two heterotretramers composed of MTOR, MLST8, RICTOR and MAPKAP1/SIN1. Interacts with PLPP7 and PML. Interacts with PRR5 and RICTOR; the interaction is direct within the mTORC2 complex and interaction with RICTOR is enhanced by deubiquitination of RICTOR by USP9X. mTORC1 and mTORC2 associate with DEPTOR, which regulates their activity. Interacts with WAC; WAC positively regulates MTOR activity by promoting the assembly of the TTT complex composed of TELO2, TTI1 and TTI2 and the RUVBL complex composed of RUVBL1 and RUVBL2 into the TTT-RUVBL complex which leads to the dimerization of the mTORC1 complex and its subsequent activation. Interacts with UBQLN1. Interacts with TTI1 and TELO2. Interacts with CLIP1; phosphorylates and regulates CLIP1. Interacts with NBN. Interacts with HTR6. Interacts with BRAT1. Interacts with MEAK7 (via C-terminal domain); the interaction increases upon nutrient stimulation. Interacts with TM4SF5; the interaction is positively regulated by arginine and is negatively regulated by leucine. Interacts with GPR137B. Interacts with NCKAP1L. Interacts with TPCN1 and TPCN2; the interaction is required for TPCN1 and TPCN2 sensitivity to ATP. Interacts with ATP6V1A and with CRYAB, forming a ternary complex. Interacts with SLC38A7; this interaction mediates the recruitment of mTORC1 to the lysosome and its subsequent activation. Interacts with TSPAN8. Autophosphorylates when part of mTORC1 or mTORC2. Phosphorylation at Ser-1261, Ser-2159 and Thr-2164 promotes autophosphorylation. Phosphorylated at Ser-2448 by RPS6KB1. Phosphorylation in the kinase domain modulates the interactions of MTOR with RPTOR and AKT1S1/PRAS40 and leads to increased intrinsic mTORC1 kinase activity. Phosphorylation at Ser-2159 by TBK1 in response to growth factors and pathogen recognition receptors promotes mTORC1 activity. Phosphorylation at Ser-2159 by TBK1 in response to EGF growth factor promotes mTORC2 activity, leading to AKT1 phosphorylation and activation. Phosphorylation at Thr-2173 in the ATP-binding region by AKT1 strongly reduces kinase activity. In terms of processing, ubiquitinated at Lys-2066 by the SCF(FBXO22) complex via 'Lys-27'-linked ubiquitination prevents mTORC1 substrate recruitment.

It localises to the lysosome membrane. The protein resides in the endoplasmic reticulum membrane. It is found in the golgi apparatus membrane. Its subcellular location is the cell membrane. The protein localises to the mitochondrion outer membrane. It localises to the cytoplasm. The protein resides in the nucleus. It is found in the PML body. Its subcellular location is the microsome membrane. The protein localises to the cytoplasmic vesicle. It localises to the phagosome. It carries out the reaction L-seryl-[protein] + ATP = O-phospho-L-seryl-[protein] + ADP + H(+). It catalyses the reaction L-threonyl-[protein] + ATP = O-phospho-L-threonyl-[protein] + ADP + H(+). The enzyme catalyses L-tyrosyl-[protein] + ATP = O-phospho-L-tyrosyl-[protein] + ADP + H(+). The mTORC1 complex is activated in response to nutrients, growth factors or amino acids: activation requires relocalization of the mTORC1 complex to lysosomes that is mediated by the Ragulator complex, SLC38A9, and the Rag GTPases RagA/RRAGA, RagB/RRAGB, RagC/RRAGC and RagD/RRAGD. Activation of mTORC1 by growth factors such as insulin involves AKT1-mediated phosphorylation of TSC1-TSC2, which leads to the activation of the RHEB GTPase a potent activator of the protein kinase activity of mTORC1. Insulin-stimulated and amino acid-dependent phosphorylation at Ser-1261 promotes autophosphorylation and the activation of mTORC1. On the other hand, low cellular energy levels can inhibit mTORC1 through activation of PRKAA1 while hypoxia inhibits mTORC1 through a REDD1-dependent mechanism which may also require PRKAA1. The kinase activity of MTOR within the mTORC1 complex is positively regulated by MLST8. The kinase activity of MTOR is inhibited by DEPTOR and AKT1S1. The non-canonical mTORC1 complex is independent of the RHEB GTPase and specifically mediates phosphorylation of MiT/TFE factors TFEB and TFE3 but not other mTORC1 substrates: it is activated by FLCN, which activates Rag GTPases RagC/RRAGC and RagD/RRAGD. MTOR is the target of the immunosuppressive and anti-cancer drug rapamycin which acts in complex with FKBP1A/FKBP12, and specifically inhibits its kinase activity. mTORC2 is also activated by growth factors, but seems to be nutrient-insensitive. mTORC2 associates and is directly activated by ribosomes. mTORC2 may also be regulated by RHEB but in an indirect manner through the PI3K signaling pathway. Serine/threonine protein kinase which is a central regulator of cellular metabolism, growth and survival in response to hormones, growth factors, nutrients, energy and stress signals. MTOR directly or indirectly regulates the phosphorylation of at least 800 proteins. Functions as part of 2 structurally and functionally distinct signaling complexes mTORC1 and mTORC2 (mTOR complex 1 and 2). In response to nutrients, growth factors or amino acids, mTORC1 is recruited to the lysosome membrane and promotes protein, lipid and nucleotide synthesis by phosphorylating key regulators of mRNA translation and ribosome synthesis. This includes phosphorylation of EIF4EBP1 and release of its inhibition toward the elongation initiation factor 4E (eiF4E). Moreover, phosphorylates and activates RPS6KB1 and RPS6KB2 that promote protein synthesis by modulating the activity of their downstream targets including ribosomal protein S6, eukaryotic translation initiation factor EIF4B, and the inhibitor of translation initiation PDCD4. Stimulates the pyrimidine biosynthesis pathway, both by acute regulation through RPS6KB1-mediated phosphorylation of the biosynthetic enzyme CAD, and delayed regulation, through transcriptional enhancement of the pentose phosphate pathway which produces 5-phosphoribosyl-1-pyrophosphate (PRPP), an allosteric activator of CAD at a later step in synthesis, this function is dependent on the mTORC1 complex. Regulates ribosome synthesis by activating RNA polymerase III-dependent transcription through phosphorylation and inhibition of MAF1 an RNA polymerase III-repressor. Activates dormant ribosomes by mediating phosphorylation of SERBP1, leading to SERBP1 inactivation and reactivation of translation. In parallel to protein synthesis, also regulates lipid synthesis through SREBF1/SREBP1 and LPIN1. To maintain energy homeostasis mTORC1 may also regulate mitochondrial biogenesis through regulation of PPARGC1A. In the same time, mTORC1 inhibits catabolic pathways: negatively regulates autophagy through phosphorylation of ULK1. Under nutrient sufficiency, phosphorylates ULK1 at 'Ser-758', disrupting the interaction with AMPK and preventing activation of ULK1. Also prevents autophagy through phosphorylation of the autophagy inhibitor DAP. Also prevents autophagy by phosphorylating RUBCNL/Pacer under nutrient-rich conditions. Prevents autophagy by mediating phosphorylation of AMBRA1, thereby inhibiting AMBRA1 ability to mediate ubiquitination of ULK1 and interaction between AMBRA1 and PPP2CA. mTORC1 exerts a feedback control on upstream growth factor signaling that includes phosphorylation and activation of GRB10 a INSR-dependent signaling suppressor. Among other potential targets mTORC1 may phosphorylate CLIP1 and regulate microtubules. The mTORC1 complex is inhibited in response to starvation and amino acid depletion. The non-canonical mTORC1 complex, which acts independently of RHEB, specifically mediates phosphorylation of MiT/TFE factors TFEB and TFE3 in the presence of nutrients, promoting their cytosolic retention and inactivation. Upon starvation or lysosomal stress, inhibition of mTORC1 induces dephosphorylation and nuclear translocation of TFEB and TFE3, promoting their transcription factor activity. The mTORC1 complex regulates pyroptosis in macrophages by promoting GSDMD oligomerization. MTOR phosphorylates RPTOR which in turn inhibits mTORC1. As part of the mTORC2 complex, MTOR transduces signals from growth factors to pathways involved in proliferation, cytoskeletal organization, lipogenesis and anabolic output. In response to growth factors, mTORC2 phosphorylates and activates AGC protein kinase family members, including AKT (AKT1, AKT2 and AKT3), PKC (PRKCA, PRKCB and PRKCE) and SGK1. In contrast to mTORC1, mTORC2 is nutrient-insensitive. mTORC2 plays a critical role in AKT1 activation by mediating phosphorylation of different sites depending on the context, such as 'Thr-450', 'Ser-473', 'Ser-477' or 'Thr-479', facilitating the phosphorylation of the activation loop of AKT1 on 'Thr-308' by PDPK1/PDK1 which is a prerequisite for full activation. mTORC2 also regulates the phosphorylation of SGK1 at 'Ser-422'. mTORC2 may regulate the actin cytoskeleton, through phosphorylation of PRKCA, PXN and activation of the Rho-type guanine nucleotide exchange factors RHOA and RAC1A or RAC1B. The mTORC2 complex also phosphorylates various proteins involved in insulin signaling, such as FBXW8 and IGF2BP1. May also regulate insulin signaling by acting as a tyrosine protein kinase that catalyzes phosphorylation of IGF1R and INSR. Regulates osteoclastogenesis by adjusting the expression of CEBPB isoforms. Plays an important regulatory role in the circadian clock function; regulates period length and rhythm amplitude of the suprachiasmatic nucleus (SCN) and liver clocks. In Rattus norvegicus (Rat), this protein is Serine/threonine-protein kinase mTOR.